Here is a 23-residue protein sequence, read N- to C-terminus: Alpha-amanitin proprotein (23 aa).

A (3R,4R)-4,5-dihydroxyisoleucine; in form alpha-amanitin modification is found at isoleucine 1. A (3R,4S)-4-hydroxyisoleucine; in form gamma-amanitin modification is found at isoleucine 1. Residues 1 to 8 (IWGIGCNP) constitute a cross-link (cyclopeptide (Ile-Pro)). The segment at residues 2-6 (WGIGC) is a cross-link (2'-cysteinyl-6'-hydroxytryptophan sulfoxide (Trp-Cys)). A 4-hydroxyproline modification is found at proline 8. The propeptide occupies 9-23 (CVGDEVTALITRGEA).

This sequence belongs to the MSDIN fungal toxin family. Post-translationally, processed by the macrocyclase-peptidase enzyme POPB to yield a toxic cyclic decapeptide. POPB first removes 10 residues from the N-terminus. Conformational trapping of the remaining peptide forces the enzyme to release this intermediate rather than proceed to macrocyclization. The enzyme rebinds the remaining peptide in a different conformation and catalyzes macrocyclization of the N-terminal 8 residues.

Major toxin belonging to the bicyclic octapeptides amatoxins that acts by binding non-competitively to RNA polymerase II and greatly slowing the elongation of transcripts from target promoters. The chain is Alpha-amanitin proprotein from Amanita fuligineoides.